The primary structure comprises 269 residues: tRNA-cytidine(32) 2-sulfurtransferase (269 aa).

The short motif at Ser53–Ser58 is the PP-loop motif element. 3 residues coordinate [4Fe-4S] cluster: Cys128, Cys131, and Cys218.

Belongs to the TtcA family. As to quaternary structure, homodimer. Requires Mg(2+) as cofactor. The cofactor is [4Fe-4S] cluster.

It is found in the cytoplasm. It carries out the reaction cytidine(32) in tRNA + S-sulfanyl-L-cysteinyl-[cysteine desulfurase] + AH2 + ATP = 2-thiocytidine(32) in tRNA + L-cysteinyl-[cysteine desulfurase] + A + AMP + diphosphate + H(+). It functions in the pathway tRNA modification. Catalyzes the ATP-dependent 2-thiolation of cytidine in position 32 of tRNA, to form 2-thiocytidine (s(2)C32). The sulfur atoms are provided by the cysteine/cysteine desulfurase (IscS) system. The protein is tRNA-cytidine(32) 2-sulfurtransferase of Pelobacter propionicus (strain DSM 2379 / NBRC 103807 / OttBd1).